The primary structure comprises 81 residues: Styelin-E (81 aa).

The N-terminal stretch at 1–22 (MQMKATILIVLVALFMIQQSEA) is a signal peptide. Tryptophan 24 bears the 6'-bromotryptophan mark. At arginine 26 the chain carries 3,4-dihydroxyarginine. A 4,5-dihydroxylysine mark is found at lysine 27, lysine 30, and lysine 34. 2 positions are modified to 3',4'-dihydroxyphenylalanine: tyrosine 36 and tyrosine 37. The residue at position 38 (lysine 38) is a 4,5-dihydroxylysine. Lysine 40 is subject to 5-hydroxylysine. A 3',4'-dihydroxyphenylalanine mark is found at tyrosine 41 and tyrosine 42. Lysine 44 bears the 5-hydroxylysine mark. Leucine 54 is subject to Leucine amide. A propeptide spans 56 to 81 (DMTDEEFQDFMKEVEQAREEELQSRQ) (removed in mature form).

Post-translationally, contains L-DOPA (3',4'-dihydroxyphenylalanine). As to expression, hemocytes and pharyngeal tissues.

The protein resides in the secreted. Bactericidal against several Gram-positive and Gram-negative bacteria. The polypeptide is Styelin-E (Styela clava (Sea squirt)).